We begin with the raw amino-acid sequence, 375 residues long: Tyrosine--tRNA ligase (375 aa).

5 residues coordinate L-tyrosine: tyrosine 37, tyrosine 168, glutamine 172, aspartate 175, and glutamine 190. Positions 251 to 255 match the 'KMSKS' region motif; that stretch reads KMSKS. ATP is bound at residue lysine 254.

The protein belongs to the class-I aminoacyl-tRNA synthetase family. TyrS type 4 subfamily. Homodimer.

The protein localises to the cytoplasm. It carries out the reaction tRNA(Tyr) + L-tyrosine + ATP = L-tyrosyl-tRNA(Tyr) + AMP + diphosphate + H(+). Its function is as follows. Catalyzes the attachment of tyrosine to tRNA(Tyr) in a two-step reaction: tyrosine is first activated by ATP to form Tyr-AMP and then transferred to the acceptor end of tRNA(Tyr). The polypeptide is Tyrosine--tRNA ligase (Pyrococcus abyssi (strain GE5 / Orsay)).